Reading from the N-terminus, the 407-residue chain is Phosphonoacetate hydrolase (407 aa).

7 residues coordinate Zn(2+): aspartate 25, threonine 64, aspartate 202, histidine 206, aspartate 241, histidine 242, and histidine 368. Positions 64 and 202 each coordinate substrate. 2 residues coordinate substrate: histidine 242 and histidine 368.

This sequence belongs to the alkaline phosphatase family. PhnA subfamily. As to quaternary structure, homodimer. Zn(2+) serves as cofactor.

It carries out the reaction phosphonoacetate + H2O = acetate + phosphate + H(+). Completely inhibited by EDTA and 1,10-phenanthroline. Moderately inhibited by the phosphonocarboxylic acids phosphonoformate and 3-phosphonopropionate and the phosphonate herbicide glyphosate. Partially inhibited by the reducing agents sodium sulfide and dithiotheitol and the chelating agent iminodiacetate. Nonphosphonate analogs of phosphonoacetate, such as arsonoacetate, sulfonoacetate and malonate are poor inhibitors. Inorganic phosphate, acetate and the known phosphonotase inhibitor phosphite have little effect on activity. Not inhibited by the alkylphosphonic acids methylphosphonate and ethylphosphonate, or the aminoalkylphosphonates 2-aminoethylphosphonate, 3-aminopropylphosphonate and 4-aminobutylphosphonate. Fe(3+), Ca(2+), Mg(2+) and Cs(+) have no effect on activity. Activity is slightly increased by the aminoalkylphosphonates 1-aminoethylphosphonate, 1-aminobutylphosphonate, 2-amino-4-butylphosphonate. Activity is increased by Zn(2+), Mn(2+) and Co(2+), these 3 metal ions also allow recovery of activity after EDTA treatment. Specifically hydrolyzes phosphonoacetate. Does not have activity on other organophosphonates or acetates. This Pseudomonas fluorescens protein is Phosphonoacetate hydrolase.